Consider the following 477-residue polypeptide: M-phase inducer phosphatase 3 (477 aa).

The tract at residues 1–20 is disordered; sequence MSAEFFSSKREEGSLASGPS. Residue Ser2 is modified to N-acetylserine. Residues Ser20 and Ser38 each carry the phosphoserine modification. Thr48 carries the phosphothreonine; by CDK1 modification. Ser58, Ser62, and Ser65 each carry phosphoserine. A Phosphothreonine; by CDK1 modification is found at Thr68. Ser123 is modified (phosphoserine; by CDK1). Ser130 carries the phosphoserine modification. At Thr131 the chain carries Phosphothreonine. A Phosphoserine; by CDK1 modification is found at Ser169. Ser192 and Ser199 each carry phosphoserine; by PLK3. A Phosphoserine; by CDK1 modification is found at Ser218. Ser220 is modified (phosphoserine; by CHEK1, CHEK2, BRSK1, MAPK14 AND MARK3). The Rhodanese domain maps to 325–432; it reads LIEKFYIIDC…FFPEYMELCE (108 aa). Cys381 is a catalytic residue. Ser476 bears the Phosphoserine mark.

Belongs to the MPI phosphatase family. Interacts with MAPK14 and 14-3-3 proteins. When phosphorylated on Ser-130 and/or Thr-131, interacts with PLK1. Interacts with MARK3/C-TAK1. In terms of processing, phosphorylated by CHEK1 and MAPK14 at Ser-220. This phosphorylation creates a binding site for 14-3-3 protein and inhibits the phosphatase. Phosphorylated by PLK4. Phosphorylated by PLK1, leading to activate the phosphatase activity. Phosphorylation by PLK3 at Ser-192 promotes nuclear translocation. Ser-199 is a minor phosphorylation site. Phosphorylation by CDK1 occurs at G2 and G2-M transition and leads to increased activity.

The protein localises to the nucleus. The catalysed reaction is O-phospho-L-tyrosyl-[protein] + H2O = L-tyrosyl-[protein] + phosphate. Functions as a dosage-dependent inducer in mitotic control. Tyrosine protein phosphatase required for progression of the cell cycle. When phosphorylated, highly effective in activating G2 cells into prophase. Directly dephosphorylates CDK1 and activates its kinase activity. This is M-phase inducer phosphatase 3 (CDC25C) from Bos taurus (Bovine).